We begin with the raw amino-acid sequence, 171 residues long: uncharacterized protein (171 aa).

2 disordered regions span residues Met1–Lys41 and Asp114–Arg147. Positions Ala27 to Ser38 are enriched in low complexity. The segment covering Leu116–Met125 has biased composition (polar residues).

This is an uncharacterized protein from Mus musculus (Mouse).